The sequence spans 330 residues: Aspartate--ammonia ligase (330 aa).

The protein belongs to the class-II aminoacyl-tRNA synthetase family. AsnA subfamily.

It is found in the cytoplasm. It catalyses the reaction L-aspartate + NH4(+) + ATP = L-asparagine + AMP + diphosphate + H(+). It functions in the pathway amino-acid biosynthesis; L-asparagine biosynthesis; L-asparagine from L-aspartate (ammonia route): step 1/1. In Haemophilus influenzae (strain ATCC 51907 / DSM 11121 / KW20 / Rd), this protein is Aspartate--ammonia ligase.